Reading from the N-terminus, the 301-residue chain is Chitin deacetylase 1 (301 aa).

The first 24 residues, 1 to 24 (MKIFNTIQSVLFAAFFLKQGNCLA), serve as a signal peptide directing secretion. N-linked (GlcNAc...) asparagine glycans are attached at residues asparagine 26, asparagine 50, and asparagine 68. An intrachain disulfide couples cysteine 107 to cysteine 290. The region spanning 108-288 (FKLSQTFDDG…LIGSDQLTIA (181 aa)) is the NodB homology domain. The active-site Proton acceptor is aspartate 115. Residue aspartate 115 coordinates acetate. 3 residues coordinate Co(2+): aspartate 116, histidine 162, and histidine 166. Asparagine 189 is a glycosylation site (N-linked (GlcNAc...) asparagine). An acetate-binding site is contributed by tyrosine 203. Histidine 263 functions as the Proton donor in the catalytic mechanism.

It belongs to the polysaccharide deacetylase family. Co(2+) is required as a cofactor.

The protein localises to the prospore. The catalysed reaction is [(1-&gt;4)-N-acetyl-beta-D-glucosaminyl](n) + n H2O = chitosan + n acetate. Functionally, hydrolyzes the N-acetamido groups of N-acetyl-D-glucosamine residues in chitin to form chitosan and acetate. Chitosan is a component of the spore wall. The chain is Chitin deacetylase 1 from Saccharomyces cerevisiae (strain ATCC 204508 / S288c) (Baker's yeast).